The primary structure comprises 457 residues: ATP-dependent RNA helicase DbpA (457 aa).

Positions 3 to 31 (AFSTLNVLPPAQLTNLNELGYLTMTPVQA) match the Q motif motif. The 172-residue stretch at 34-205 (LPAILAGKDV…GRVQRDPLAI (172 aa)) folds into the Helicase ATP-binding domain. Residue 47–54 (AKTGSGKT) coordinates ATP. The short motif at 153 to 156 (DEAD) is the DEAD box element. The region spanning 230-376 (PLLQRLLSLH…QTPPANSSIA (147 aa)) is the Helicase C-terminal domain. The interval 383-457 (ATLCIDGGKK…GKTCRVRLLK (75 aa)) is involved in 23S rRNA binding.

It belongs to the DEAD box helicase family. DbpA subfamily. In terms of assembly, monomer.

The protein resides in the cytoplasm. It carries out the reaction ATP + H2O = ADP + phosphate + H(+). With respect to regulation, requires hairpin 92 of 23S rRNA for optimal activity. ATPase activity is stimulated by interaction of the N-terminal domain with RNA. DEAD-box RNA helicase involved in the assembly of the 50S ribosomal subunit. Has an RNA-dependent ATPase activity, which is specific for 23S rRNA, and a 3' to 5' RNA helicase activity that uses the energy of ATP hydrolysis to destabilize and unwind short rRNA duplexes. Requires a single-stranded RNA loading site on the 3' side of the substrate helix. The protein is ATP-dependent RNA helicase DbpA of Escherichia coli (strain K12).